The following is a 759-amino-acid chain: Forkhead box protein M1 (759 aa).

The disordered stretch occupies residues M1 to S92. A compositionally biased stretch (basic and acidic residues) spans L48 to Q63. Residues R260–D358 constitute a DNA-binding region (fork-head). Disordered regions lie at residues A420–G450, S516–V535, and K596–V631. Low complexity predominate over residues K601 to T612.

In terms of tissue distribution, localized to the animal hemisphere of early cleavage stage embryos. During neurulation, expressed in the neural folds. Later, expressed in the spinal cord and in the eye field. During tailbud stages, expression is still restricted to the neuroectoderm, predominantly to the hindbrain, the eye and the spinal cord. With ongoing development, expression is also found at lower levels in the branchial arches. At stage 35, expressed in the rhombencephalon and in the eye retina.

Its subcellular location is the nucleus. Transcription factor regulating the expression of cell cycle genes essential for DNA replication and mitosis. Plays a role in the control of cell proliferation. Also plays a role in DNA break repair, participating in the DNA damage checkpoint response. Promotes transcription of PHB2. The protein is Forkhead box protein M1 of Xenopus laevis (African clawed frog).